The primary structure comprises 150 residues: Ribosomal RNA large subunit methyltransferase H (150 aa).

S-adenosyl-L-methionine contacts are provided by residues A100 and 118 to 123 (LSEMTF).

This sequence belongs to the RNA methyltransferase RlmH family. As to quaternary structure, homodimer.

It is found in the cytoplasm. The catalysed reaction is pseudouridine(1915) in 23S rRNA + S-adenosyl-L-methionine = N(3)-methylpseudouridine(1915) in 23S rRNA + S-adenosyl-L-homocysteine + H(+). Its function is as follows. Specifically methylates the pseudouridine at position 1915 (m3Psi1915) in 23S rRNA. This Helicobacter pylori (strain J99 / ATCC 700824) (Campylobacter pylori J99) protein is Ribosomal RNA large subunit methyltransferase H.